A 541-amino-acid chain; its full sequence is MVADPPRDSKGLAAAEPTANGGLALASIEDQGAAAGGYCGSRDQVRRCLRANLLVLLTVVAVVAGVALGLGVSGAGGALALGPERLSAFVFPGELLLRLLRMIILPLVVCSLIGGAASLDPGALGRLGAWALLFFLVTTLLASALGVGLALALQPGAASAAINASVGAAGSAENAPSKEVLDSFLDLARNIFPSNLVSAAFRSYSTTYEERNITGTRVKVPVGQEVEGMNILGLVVFAIVFGVALRKLGPEGELLIRFFNSFNEATMVLVSWIMWYAPVGIMFLVAGKIVEMEDVGLLFARLGKYILCCLLGHAIHGLLVLPLIYFLFTRKNPYRFLWGIVTPLATAFGTSSSSATLPLMMKCVEENNGVAKHISRFILPIGATVNMDGAALFQCVAAVFIAQLSQQSLDFVKIITILVTATASSVGAAGIPAGGVLTLAIILEAVNLPVDHISLILAVDWLVDRSCTVLNVEGDALGAGLLQNYVDRTESRSTEPELIQVKSELPLDPLPVPTEEGNPLLKHYRGPAGDATVASEKESVM.

Methionine 1 carries the post-translational modification N-acetylmethionine. Residues 1 to 51 lie on the Cytoplasmic side of the membrane; sequence MVADPPRDSKGLAAAEPTANGGLALASIEDQGAAAGGYCGSRDQVRRCLRA. Residues 52-81 form a helical membrane-spanning segment; sequence NLLVLLTVVAVVAGVALGLGVSGAGGALAL. The Extracellular portion of the chain corresponds to 82-94; it reads GPERLSAFVFPGE. Residues 95–116 form a helical membrane-spanning segment; it reads LLLRLLRMIILPLVVCSLIGGA. Residues 117-130 lie on the Cytoplasmic side of the membrane; sequence ASLDPGALGRLGAW. The chain crosses the membrane as a helical span at residues 131 to 153; that stretch reads ALLFFLVTTLLASALGVGLALAL. At 154-224 the chain is on the extracellular side; the sequence is QPGAASAAIN…GTRVKVPVGQ (71 aa). Asparagine 163 and asparagine 212 each carry an N-linked (GlcNAc...) asparagine glycan. The chain crosses the membrane as a helical span at residues 225–248; sequence EVEGMNILGLVVFAIVFGVALRKL. Residues 249–257 lie on the Cytoplasmic side of the membrane; that stretch reads GPEGELLIR. Residues 258 to 285 form a helical membrane-spanning segment; sequence FFNSFNEATMVLVSWIMWYAPVGIMFLV. The Extracellular segment spans residues 286-306; the sequence is AGKIVEMEDVGLLFARLGKYI. The helical transmembrane segment at 307–328 threads the bilayer; the sequence is LCCLLGHAIHGLLVLPLIYFLF. At 329 to 333 the chain is on the cytoplasmic side; the sequence is TRKNP. Positions 334–364 form an intramembrane region, discontinuously helical; sequence YRFLWGIVTPLATAFGTSSSSATLPLMMKCV. Residues 365-373 lie on the Cytoplasmic side of the membrane; sequence EENNGVAKH. Residues 374-400 form a helical membrane-spanning segment; that stretch reads ISRFILPIGATVNMDGAALFQCVAAVF. Positions 382, 384, and 386 each coordinate Na(+). Residues 401–413 are Extracellular-facing; it reads IAQLSQQSLDFVK. Positions 414-447 form an intramembrane region, discontinuously helical; it reads IITILVTATASSVGAAGIPAGGVLTLAIILEAVN. Residues 448 to 460 lie on the Extracellular side of the membrane; that stretch reads LPVDHISLILAVD. Residues 461–482 traverse the membrane as a helical segment; that stretch reads WLVDRSCTVLNVEGDALGAGLL. Positions 471 and 475 each coordinate Na(+). The Cytoplasmic segment spans residues 483–541; sequence QNYVDRTESRSTEPELIQVKSELPLDPLPVPTEEGNPLLKHYRGPAGDATVASEKESVM. At serine 493 the chain carries Phosphoserine. Threonine 494 is subject to Phosphothreonine. Phosphoserine is present on residues serine 503, serine 535, and serine 539. Residues 511-541 form a disordered region; that stretch reads PVPTEEGNPLLKHYRGPAGDATVASEKESVM.

The protein belongs to the dicarboxylate/amino acid:cation symporter (DAACS) (TC 2.A.23) family. SLC1A5 subfamily. As to quaternary structure, homotrimer. Interacts with ERVH48-1/suppressyn; may negatively regulate syncytialization. In terms of tissue distribution, placenta, lung, skeletal muscle, kidney, pancreas, and intestine. Expressed in CD34-positive hematopoietic progenitors (at protein level).

The protein resides in the cell membrane. It is found in the melanosome. It catalyses the reaction L-glutamine(out) + L-serine(in) + Na(+)(out) = L-glutamine(in) + L-serine(out) + Na(+)(in). It carries out the reaction L-glutamine(in) + L-serine(out) + Na(+)(out) = L-glutamine(out) + L-serine(in) + Na(+)(in). The catalysed reaction is L-threonine(in) + L-glutamine(out) + Na(+)(out) = L-threonine(out) + L-glutamine(in) + Na(+)(in). The enzyme catalyses L-threonine(out) + L-glutamine(in) + Na(+)(out) = L-threonine(in) + L-glutamine(out) + Na(+)(in). It catalyses the reaction L-asparagine(in) + L-glutamine(out) + Na(+)(out) = L-asparagine(out) + L-glutamine(in) + Na(+)(in). It carries out the reaction L-asparagine(out) + L-glutamine(in) + Na(+)(out) = L-asparagine(in) + L-glutamine(out) + Na(+)(in). The catalysed reaction is L-glutamine(in) + L-alanine(out) + Na(+)(out) = L-glutamine(out) + L-alanine(in) + Na(+)(in). The enzyme catalyses L-valine(out) + L-glutamine(in) + Na(+)(out) = L-valine(in) + L-glutamine(out) + Na(+)(in). It catalyses the reaction L-glutamine(in) + L-methionine(out) + Na(+)(out) = L-glutamine(out) + L-methionine(in) + Na(+)(in). It carries out the reaction L-glutamine(in) + L-glutamate(out) + Na(+)(out) + H(+)(out) = L-glutamine(out) + L-glutamate(in) + Na(+)(in) + H(+)(in). The catalysed reaction is D-serine(in) + L-glutamine(out) + Na(+)(out) = D-serine(out) + L-glutamine(in) + Na(+)(in). The enzyme catalyses D-serine(in) + L-alanine(out) + Na(+)(out) = D-serine(out) + L-alanine(in) + Na(+)(in). It catalyses the reaction nitrate(in) = nitrate(out). It carries out the reaction iodide(out) = iodide(in). The catalysed reaction is thiocyanate(in) = thiocyanate(out). With respect to regulation, regulated by L-cysteine, which can either inhibit substrate influx or trigger substrate efflux without being transported itself. Functionally, sodium-coupled antiporter of neutral amino acids. In a tri-substrate transport cycle, exchanges neutral amino acids between the extracellular and intracellular compartments, coupled to the inward cotransport of at least one sodium ion. The preferred substrate is the essential amino acid L-glutamine, a precursor for biosynthesis of proteins, nucleotides and amine sugars as well as an alternative fuel for mitochondrial oxidative phosphorylation. Exchanges L-glutamine with other neutral amino acids such as L-serine, L-threonine and L-asparagine in a bidirectional way. Provides L-glutamine to proliferating stem and activated cells driving the metabolic switch toward cell differentiation. The transport cycle is usually pH-independent, with the exception of L-glutamate. Transports extracellular L-glutamate coupled to the cotransport of one proton and one sodium ion in exchange for intracellular L-glutamine counter-ion. May provide for L-glutamate uptake in glial cells regulating glutamine/glutamate cycle in the nervous system. Can transport D-amino acids. Mediates D-serine release from the retinal glia potentially affecting NMDA receptor function in retinal neurons. Displays sodium- and amino acid-dependent but uncoupled channel-like anion conductance with a preference SCN(-) &gt;&gt; NO3(-) &gt; I(-) &gt; Cl(-). Through binding of the fusogenic protein syncytin-1/ERVW-1 may mediate trophoblasts syncytialization, the spontaneous fusion of their plasma membranes, an essential process in placental development. In terms of biological role, (Microbial infection) Acts as a cell surface receptor for Feline endogenous virus RD114. (Microbial infection) Acts as a cell surface receptor for Baboon M7 endogenous virus. Its function is as follows. (Microbial infection) Acts as a cell surface receptor for type D simian retroviruses. The sequence is that of Neutral amino acid transporter B(0) from Homo sapiens (Human).